The following is a 68-amino-acid chain: Medusin-DA1 (68 aa).

Positions 1–22 (MAFLKKSLFLVLFLGLVSLSVC) are cleaved as a signal peptide. Positions 23–48 (EEEKRENEEEKNEQEEDDREERNEEK) are excised as a propeptide. Residues 25–47 (EKRENEEEKNEQEEDDREERNEE) are disordered. Over residues 31 to 41 (EEKNEQEEDDR) the composition is skewed to acidic residues. L67 is modified (leucine amide).

This sequence belongs to the frog skin active peptide (FSAP) family. Medusin subfamily. Expressed by the skin glands.

The protein localises to the secreted. Functionally, antimicrobial peptide with activity against Gram-positive bacteria (S.aureus, MIC=32 mg/L) and fungi (C.albicans, MIC=64 mg/L). Shows weak hemolytic activity. In Agalychnis dacnicolor (Giant Mexican leaf frog), this protein is Medusin-DA1.